Reading from the N-terminus, the 460-residue chain is Receptor-like cytosolic serine/threonine-protein kinase RBK2 (460 aa).

A disordered region spans residues 1-67 (MNSASAHDLR…DADTDVQCKN (67 aa)). Basic and acidic residues predominate over residues 7–23 (HDLRLLEVDKEKQDPKS). The Protein kinase domain occupies 143 to 415 (FSPENIIGRG…VELLLGHEDV (273 aa)). Residues 149–157 (IGRGGYADV) and Lys-171 each bind ATP. Asp-267 (proton acceptor) is an active-site residue. Thr-307 is modified (phosphothreonine). The residue at position 315 (Tyr-315) is a Phosphotyrosine.

It belongs to the protein kinase superfamily. Ser/Thr protein kinase family. In terms of assembly, interacts with ARAC5 and ARAC10.

Its subcellular location is the cytoplasm. It catalyses the reaction L-seryl-[protein] + ATP = O-phospho-L-seryl-[protein] + ADP + H(+). The catalysed reaction is L-threonyl-[protein] + ATP = O-phospho-L-threonyl-[protein] + ADP + H(+). This Arabidopsis thaliana (Mouse-ear cress) protein is Receptor-like cytosolic serine/threonine-protein kinase RBK2 (RBK2).